Reading from the N-terminus, the 1111-residue chain is Probable arabinosyltransferase A (1111 aa).

Transmembrane regions (helical) follow at residues 12–34, 205–224, 333–355, 370–387, 394–413, 423–445, 462–484, 530–547, 554–576, 581–603, 615–637, 652–674, and 695–717; these read IIRLIAVGAGITGLLLCAVVPLL, IAVGVGAAAVLIAILALSAL, VWMRIPATLAGIACWLIINHWVL, VAVLTAGAMFLAAWLPFN, PLIALGVLFTWVLVERAIAL, AVVAILTATLAPQGLIAIAALLT, GLLAPLLVLAASLSLITLVVFHS, FPVLVLLLCMFGVLVVLL, GLASGPTWRLIGTTATSLLLLTF, WAIQFGALAGLTGTFGAIAAFAF, TVYITALLFVLAWATAGINGWFG, IAGHPVTSIFLTLSILTGLLAGG, and FLATTPLVVVATTMVLCEVGSLA. Positions 804–831 are disordered; that stretch reads GLVNSDASPNKPNVTFSDSAGTAGGKGP. Residues 808 to 823 are compositionally biased toward polar residues; that stretch reads SDASPNKPNVTFSDSA.

It belongs to the emb family.

It localises to the cell membrane. Its function is as follows. Arabinosyl transferase responsible for the polymerization of arabinose into the arabinan of arabinogalactan. The chain is Probable arabinosyltransferase A (embA) from Mycobacterium leprae (strain TN).